Here is a 161-residue protein sequence, read N- to C-terminus: Xanthine-guanine phosphoribosyltransferase (161 aa).

5-phospho-alpha-D-ribose 1-diphosphate is bound by residues 41-42 (RG) and 95-103 (DDLVDTGNT). Asp96 is a Mg(2+) binding site. Asp99 and Ile142 together coordinate guanine. Residues Asp99 and Ile142 each contribute to the xanthine site. GMP is bound by residues 99-103 (DTGNT) and 141-142 (WI).

It belongs to the purine/pyrimidine phosphoribosyltransferase family. XGPT subfamily. Homotetramer. The cofactor is Mg(2+).

It is found in the cell inner membrane. It carries out the reaction GMP + diphosphate = guanine + 5-phospho-alpha-D-ribose 1-diphosphate. The enzyme catalyses XMP + diphosphate = xanthine + 5-phospho-alpha-D-ribose 1-diphosphate. It catalyses the reaction IMP + diphosphate = hypoxanthine + 5-phospho-alpha-D-ribose 1-diphosphate. Its pathway is purine metabolism; GMP biosynthesis via salvage pathway; GMP from guanine: step 1/1. The protein operates within purine metabolism; XMP biosynthesis via salvage pathway; XMP from xanthine: step 1/1. Its function is as follows. Purine salvage pathway enzyme that catalyzes the transfer of the ribosyl-5-phosphate group from 5-phospho-alpha-D-ribose 1-diphosphate (PRPP) to the N9 position of the 6-oxopurines guanine and xanthine to form the corresponding ribonucleotides GMP (guanosine 5'-monophosphate) and XMP (xanthosine 5'-monophosphate), with the release of PPi. To a lesser extent, also acts on hypoxanthine. In Idiomarina loihiensis (strain ATCC BAA-735 / DSM 15497 / L2-TR), this protein is Xanthine-guanine phosphoribosyltransferase.